We begin with the raw amino-acid sequence, 153 residues long: Small ribosomal subunit protein bS16 (153 aa).

The protein belongs to the bacterial ribosomal protein bS16 family.

This is Small ribosomal subunit protein bS16 from Leifsonia xyli subsp. xyli (strain CTCB07).